The primary structure comprises 264 residues: Thymidylate synthase (264 aa).

Arg-21 contributes to the dUMP binding site. Residue His-51 participates in (6R)-5,10-methylene-5,6,7,8-tetrahydrofolate binding. 126 to 127 (RR) provides a ligand contact to dUMP. Residue Cys-146 is the Nucleophile of the active site. Residues 166 to 169 (RSGD), Asn-177, and 207 to 209 (HLY) each bind dUMP. A (6R)-5,10-methylene-5,6,7,8-tetrahydrofolate-binding site is contributed by Asp-169. Ala-263 lines the (6R)-5,10-methylene-5,6,7,8-tetrahydrofolate pocket.

Belongs to the thymidylate synthase family. Bacterial-type ThyA subfamily. Homodimer.

Its subcellular location is the cytoplasm. It catalyses the reaction dUMP + (6R)-5,10-methylene-5,6,7,8-tetrahydrofolate = 7,8-dihydrofolate + dTMP. It participates in pyrimidine metabolism; dTTP biosynthesis. Catalyzes the reductive methylation of 2'-deoxyuridine-5'-monophosphate (dUMP) to 2'-deoxythymidine-5'-monophosphate (dTMP) while utilizing 5,10-methylenetetrahydrofolate (mTHF) as the methyl donor and reductant in the reaction, yielding dihydrofolate (DHF) as a by-product. This enzymatic reaction provides an intracellular de novo source of dTMP, an essential precursor for DNA biosynthesis. The polypeptide is Thymidylate synthase (Xanthomonas campestris pv. campestris (strain 8004)).